The sequence spans 261 residues: Hemin import ATP-binding protein HmuV (261 aa).

Positions 2-243 constitute an ABC transporter domain; it reads LCANNVSAQI…ALLKRVYNIN (242 aa). 34–41 provides a ligand contact to ATP; that stretch reads GPNGAGKS.

Belongs to the ABC transporter superfamily. Heme (hemin) importer (TC 3.A.1.14.5) family. The complex is composed of two ATP-binding proteins (HmuV), two transmembrane proteins (HmuU) and a solute-binding protein (HmuT).

Its subcellular location is the cell inner membrane. In terms of biological role, part of the ABC transporter complex HmuTUV involved in hemin import. Responsible for energy coupling to the transport system. The chain is Hemin import ATP-binding protein HmuV from Pseudoalteromonas translucida (strain TAC 125).